We begin with the raw amino-acid sequence, 280 residues long: Killer cell lectin-like receptor 7 (280 aa).

At methionine 1 to lysine 44 the chain is on the cytoplasmic side. A helical; Signal-anchor for type II membrane protein transmembrane segment spans residues leucine 45–isoleucine 66. The Extracellular portion of the chain corresponds to threonine 67 to histidine 280. Asparagine 104 carries an N-linked (GlcNAc...) asparagine glycan. In terms of domain architecture, C-type lectin spans glycine 156 to leucine 275. 4 disulfides stabilise this stretch: cysteine 163-cysteine 168, cysteine 181-cysteine 269, cysteine 185-cysteine 271, and cysteine 250-cysteine 263. N-linked (GlcNAc...) asparagine glycosylation occurs at asparagine 239.

In terms of assembly, homodimer; disulfide-linked.

It is found in the membrane. Its function is as follows. Receptor on natural killer (NK) cells for class I MHC. This chain is Killer cell lectin-like receptor 7 (Klra7), found in Mus musculus (Mouse).